Consider the following 383-residue polypeptide: Lipid-A-disaccharide synthase (383 aa).

Belongs to the LpxB family.

It carries out the reaction a lipid X + a UDP-2-N,3-O-bis[(3R)-3-hydroxyacyl]-alpha-D-glucosamine = a lipid A disaccharide + UDP + H(+). It participates in bacterial outer membrane biogenesis; LPS lipid A biosynthesis. Its function is as follows. Condensation of UDP-2,3-diacylglucosamine and 2,3-diacylglucosamine-1-phosphate to form lipid A disaccharide, a precursor of lipid A, a phosphorylated glycolipid that anchors the lipopolysaccharide to the outer membrane of the cell. The polypeptide is Lipid-A-disaccharide synthase (Anaeromyxobacter dehalogenans (strain 2CP-C)).